The sequence spans 156 residues: Snaclec trimecetin subunit alpha (156 aa).

The signal sequence occupies residues 1-23 (MGRFIFVSFGLLVVFLSLSGTGA). 3 disulfide bridges follow: Cys25-Cys36, Cys53-Cys150, and Cys125-Cys142. One can recognise a C-type lectin domain in the interval 32–151 (FRRYCYKPFK…CGERNLFMCK (120 aa)).

Belongs to the snaclec family. As to quaternary structure, heterodimer of subunits alpha and beta; disulfide-linked. Expressed by the venom gland.

It localises to the secreted. Snaclec that induces platelet aggregation in either human platelet rich plasma (PRP) or washed platelet suspensions. It causes aggregation in a dose-dependent manner even in the absence of various platelet agonists such as ADP or von Willebrand factor (vWF). Interestingly, it does not induce aggregation in rabbit PRP. A monoclonal antibody against the platelet GPIb receptor blocks the aggregation induced by trimecetin, suggesting that it acts by binding to GPIb (GP1BA/GP1BB). This chain is Snaclec trimecetin subunit alpha, found in Protobothrops mucrosquamatus (Taiwan habu).